A 222-amino-acid chain; its full sequence is Thiamine-phosphate synthase (222 aa).

Residues 42-46 (QYRDK) and N74 contribute to the 4-amino-2-methyl-5-(diphosphooxymethyl)pyrimidine site. D75 and D94 together coordinate Mg(2+). T113 provides a ligand contact to 4-amino-2-methyl-5-(diphosphooxymethyl)pyrimidine. Position 140-142 (140-142 (SAT)) interacts with 2-[(2R,5Z)-2-carboxy-4-methylthiazol-5(2H)-ylidene]ethyl phosphate. Residue K143 coordinates 4-amino-2-methyl-5-(diphosphooxymethyl)pyrimidine. G169 contributes to the 2-[(2R,5Z)-2-carboxy-4-methylthiazol-5(2H)-ylidene]ethyl phosphate binding site.

Belongs to the thiamine-phosphate synthase family. Mg(2+) is required as a cofactor.

The enzyme catalyses 2-[(2R,5Z)-2-carboxy-4-methylthiazol-5(2H)-ylidene]ethyl phosphate + 4-amino-2-methyl-5-(diphosphooxymethyl)pyrimidine + 2 H(+) = thiamine phosphate + CO2 + diphosphate. It carries out the reaction 2-(2-carboxy-4-methylthiazol-5-yl)ethyl phosphate + 4-amino-2-methyl-5-(diphosphooxymethyl)pyrimidine + 2 H(+) = thiamine phosphate + CO2 + diphosphate. It catalyses the reaction 4-methyl-5-(2-phosphooxyethyl)-thiazole + 4-amino-2-methyl-5-(diphosphooxymethyl)pyrimidine + H(+) = thiamine phosphate + diphosphate. The protein operates within cofactor biosynthesis; thiamine diphosphate biosynthesis; thiamine phosphate from 4-amino-2-methyl-5-diphosphomethylpyrimidine and 4-methyl-5-(2-phosphoethyl)-thiazole: step 1/1. Condenses 4-methyl-5-(beta-hydroxyethyl)thiazole monophosphate (THZ-P) and 2-methyl-4-amino-5-hydroxymethyl pyrimidine pyrophosphate (HMP-PP) to form thiamine monophosphate (TMP). This is Thiamine-phosphate synthase from Marinobacter nauticus (strain ATCC 700491 / DSM 11845 / VT8) (Marinobacter aquaeolei).